The following is a 217-amino-acid chain: Probable nicotinate-nucleotide adenylyltransferase (217 aa).

It belongs to the NadD family.

The enzyme catalyses nicotinate beta-D-ribonucleotide + ATP + H(+) = deamido-NAD(+) + diphosphate. It functions in the pathway cofactor biosynthesis; NAD(+) biosynthesis; deamido-NAD(+) from nicotinate D-ribonucleotide: step 1/1. In terms of biological role, catalyzes the reversible adenylation of nicotinate mononucleotide (NaMN) to nicotinic acid adenine dinucleotide (NaAD). This chain is Probable nicotinate-nucleotide adenylyltransferase, found in Baumannia cicadellinicola subsp. Homalodisca coagulata.